Here is a 215-residue protein sequence, read N- to C-terminus: Adenylate kinase (215 aa).

10–15 (GAGKGT) lines the ATP pocket. The tract at residues 30-59 (STGDIFRANISGKTELGMKAKGYMDKGLLV) is NMP. Residues threonine 31, arginine 36, 57–59 (LLV), 85–88 (GFPR), and glutamine 92 contribute to the AMP site. The segment at 126–163 (GRRVCSKCGASYHIEYNPTKVEGICDLCGSPVVQRKDD) is LID. An ATP-binding site is contributed by arginine 127. 2 residues coordinate Zn(2+): cysteine 130 and cysteine 133. Residue 136-137 (SY) participates in ATP binding. Positions 150 and 153 each coordinate Zn(2+). Positions 160 and 171 each coordinate AMP. Glutamine 199 is an ATP binding site.

It belongs to the adenylate kinase family. In terms of assembly, monomer.

The protein resides in the cytoplasm. The catalysed reaction is AMP + ATP = 2 ADP. Its pathway is purine metabolism; AMP biosynthesis via salvage pathway; AMP from ADP: step 1/1. Catalyzes the reversible transfer of the terminal phosphate group between ATP and AMP. Plays an important role in cellular energy homeostasis and in adenine nucleotide metabolism. This Clostridium acetobutylicum (strain ATCC 824 / DSM 792 / JCM 1419 / IAM 19013 / LMG 5710 / NBRC 13948 / NRRL B-527 / VKM B-1787 / 2291 / W) protein is Adenylate kinase.